A 366-amino-acid polypeptide reads, in one-letter code: tRNA(Met) cytidine acetate ligase (366 aa).

Residues 7–20 (IAEFNPFHYGHQYL), Gly-96, Asn-152, and Arg-175 each bind ATP.

It belongs to the TmcAL family.

The protein localises to the cytoplasm. It carries out the reaction cytidine(34) in elongator tRNA(Met) + acetate + ATP = N(4)-acetylcytidine(34) in elongator tRNA(Met) + AMP + diphosphate. Functionally, catalyzes the formation of N(4)-acetylcytidine (ac(4)C) at the wobble position of elongator tRNA(Met), using acetate and ATP as substrates. First activates an acetate ion to form acetyladenylate (Ac-AMP) and then transfers the acetyl group to tRNA to form ac(4)C34. The chain is tRNA(Met) cytidine acetate ligase from Streptococcus equi subsp. zooepidemicus (strain MGCS10565).